The chain runs to 588 residues: Dual specificity tyrosine-phosphorylation-regulated kinase 3 (588 aa).

Positions 1 to 188 (MGGTARGPGR…HGVIGGPNNG (188 aa)) are disordered. Positions 97–134 (SNTIQSDGISDSEKCSPTVSQGKSSDCLNTVKSNSSSK) are enriched in polar residues. Residues 209–522 (YEVLKIIGKG…PAQALRHPWI (314 aa)) enclose the Protein kinase domain. Residues 215 to 223 (IGKGSFGQV), K238, and 288 to 291 (FELL) each bind ATP. The Proton acceptor role is filled by D335. Residue S350 is modified to Phosphoserine. Phosphotyrosine is present on Y369. The Nuclear localization signal motif lies at 468 to 481 (RSRRGKKRGPPGSK).

It belongs to the protein kinase superfamily. CMGC Ser/Thr protein kinase family. MNB/DYRK subfamily. As to quaternary structure, interacts with SIRT1. The cofactor is Mg(2+). In terms of processing, ubiquitinated at anaphase by the anaphase-promoting complex (APC/C), leading to its degradation by the proteasome. Protein kinase activity is activated following autophosphorylation at Tyr-369. Autophosphorylation at Ser-350 stabilizes the protein and enhances the protein kinase activity. Isoform 1: Highly expressed in testis and in hematopoietic tissue such as fetal liver, and bone marrow. Isoform 1: Predominant form in fetal liver and bone marrow. Isoform 1: Present at low levels in heart, pancreas, lymph node and thymus. Isoform 2: Highly expressed in testis and in hematopoietic tissue such as fetal liver, and bone marrow. Isoform 2: Predominant form in testis. Isoform 2: Present at low levels in heart, pancreas, lymph node and thymus.

It is found in the nucleus. It localises to the cytoplasm. Its subcellular location is the nucleus speckle. The protein localises to the cytoplasmic granule. The protein resides in the cytoskeleton. It is found in the microtubule organizing center. It localises to the centrosome. The enzyme catalyses L-seryl-[protein] + ATP = O-phospho-L-seryl-[protein] + ADP + H(+). It carries out the reaction L-threonyl-[protein] + ATP = O-phospho-L-threonyl-[protein] + ADP + H(+). The catalysed reaction is L-tyrosyl-[protein] + ATP = O-phospho-L-tyrosyl-[protein] + ADP + H(+). Protein kinase activity is activated following autophosphorylation at Tyr-369. Inhibited by harmine, an ATP competitive inhibitor. Inhibited by small-compound GSK-626616. Dual-specificity protein kinase that promotes disassembly of several types of membraneless organelles during mitosis, such as stress granules, nuclear speckles and pericentriolar material. Dual-specificity tyrosine-regulated kinases (DYRKs) autophosphorylate a critical tyrosine residue in their activation loop and phosphorylate their substrate on serine and threonine residues. Acts as a central dissolvase of membraneless organelles during the G2-to-M transition, after the nuclear-envelope breakdown: acts by mediating phosphorylation of multiple serine and threonine residues in unstructured domains of proteins, such as SRRM1 and PCM1. Does not mediate disassembly of all membraneless organelles: disassembly of P-body and nucleolus is not regulated by DYRK3. Dissolution of membraneless organelles at the onset of mitosis is also required to release mitotic regulators, such as ZNF207, from liquid-unmixed organelles where they are sequestered and keep them dissolved during mitosis. Regulates mTORC1 by mediating the dissolution of stress granules: during stressful conditions, DYRK3 partitions from the cytosol to the stress granule, together with mTORC1 components, which prevents mTORC1 signaling. When stress signals are gone, the kinase activity of DYRK3 is required for the dissolution of stress granule and mTORC1 relocation to the cytosol: acts by mediating the phosphorylation of the mTORC1 inhibitor AKT1S1, allowing full reactivation of mTORC1 signaling. Also acts as a negative regulator of EPO-dependent erythropoiesis: may place an upper limit on red cell production during stress erythropoiesis. Inhibits cell death due to cytokine withdrawal in hematopoietic progenitor cells. Promotes cell survival upon genotoxic stress through phosphorylation of SIRT1: this in turn inhibits p53/TP53 activity and apoptosis. The chain is Dual specificity tyrosine-phosphorylation-regulated kinase 3 from Homo sapiens (Human).